The primary structure comprises 1062 residues: Cell division control protein 7 (1062 aa).

In terms of domain architecture, Protein kinase spans 9–259 (ITLGDCLGKG…TRKLLKHPWV (251 aa)). Residues 15 to 23 (LGKGAFGAV) and Lys-38 each bind ATP. Catalysis depends on Asp-131, which acts as the Proton acceptor. 2 stretches are compositionally biased toward polar residues: residues 296 to 310 (NRINPTLHSGRQSSY) and 376 to 394 (AFNSDQISESNNFNASPLS). 3 disordered regions span residues 296–331 (NRINPTLHSGRQSSYHMPESPKTPIAESPDHDNWDN), 361–394 (NNSSSITSSPSKSRHAFNSDQISESNNFNASPLS), and 1038–1062 (NEHKSPISKPHMPPPRWQPKQPLTQ).

Belongs to the protein kinase superfamily. Ser/Thr protein kinase family. CDC7 subfamily. In terms of assembly, interacts with spg1. Seems to interact with cdc11. Mg(2+) serves as cofactor.

It carries out the reaction L-seryl-[protein] + ATP = O-phospho-L-seryl-[protein] + ADP + H(+). The catalysed reaction is L-threonyl-[protein] + ATP = O-phospho-L-threonyl-[protein] + ADP + H(+). Functionally, protein kinase essential for cell division. Plays a key role in initiation of septum formation and cytokinesis. This chain is Cell division control protein 7 (cdc7), found in Schizosaccharomyces pombe (strain 972 / ATCC 24843) (Fission yeast).